A 155-amino-acid polypeptide reads, in one-letter code: Interleukin-2 (155 aa).

The N-terminal stretch at 1–20 (MYKMQLVACIALSLVLITNS) is a signal peptide. T23 carries an O-linked (GalNAc...) threonine glycan. A disulfide bridge connects residues C77 and C125.

This sequence belongs to the IL-2 family.

The protein localises to the secreted. Cytokine produced by activated CD4-positive helper T-cells and to a lesser extend activated CD8-positive T-cells and natural killer (NK) cells that plays pivotal roles in the immune response and tolerance. Binds to a receptor complex composed of either the high-affinity trimeric IL-2R (IL2RA/CD25, IL2RB/CD122 and IL2RG/CD132) or the low-affinity dimeric IL-2R (IL2RB and IL2RG). Interaction with the receptor leads to oligomerization and conformation changes in the IL-2R subunits resulting in downstream signaling starting with phosphorylation of JAK1 and JAK3. In turn, JAK1 and JAK3 phosphorylate the receptor to form a docking site leading to the phosphorylation of several substrates including STAT5. This process leads to activation of several pathways including STAT, phosphoinositide-3-kinase/PI3K and mitogen-activated protein kinase/MAPK pathways. Functions as a T-cell growth factor and can increase NK-cell cytolytic activity as well. Promotes strong proliferation of activated B-cells and subsequently immunoglobulin production. Plays a pivotal role in regulating the adaptive immune system by controlling the survival and proliferation of regulatory T-cells, which are required for the maintenance of immune tolerance. Moreover, participates in the differentiation and homeostasis of effector T-cell subsets, including Th1, Th2, Th17 as well as memory CD8-positive T-cells. This chain is Interleukin-2 (IL2), found in Dasypus novemcinctus (Nine-banded armadillo).